Reading from the N-terminus, the 178-residue chain is Large ribosomal subunit protein uL5 (178 aa).

This sequence belongs to the universal ribosomal protein uL5 family. In terms of assembly, part of the 50S ribosomal subunit; part of the 5S rRNA/L5/L18/L25 subcomplex. Contacts the 5S rRNA and the P site tRNA. Forms a bridge to the 30S subunit in the 70S ribosome.

This is one of the proteins that bind and probably mediate the attachment of the 5S RNA into the large ribosomal subunit, where it forms part of the central protuberance. In the 70S ribosome it contacts protein S13 of the 30S subunit (bridge B1b), connecting the 2 subunits; this bridge is implicated in subunit movement. Contacts the P site tRNA; the 5S rRNA and some of its associated proteins might help stabilize positioning of ribosome-bound tRNAs. The sequence is that of Large ribosomal subunit protein uL5 from Wigglesworthia glossinidia brevipalpis.